A 165-amino-acid chain; its full sequence is Free methionine-R-sulfoxide reductase (165 aa).

Positions 49–149 (LLEDDTLVLG…LRQLVAQLEK (101 aa)) constitute a GAF domain.

The protein belongs to the free Met sulfoxide reductase family.

It carries out the reaction [thioredoxin]-disulfide + L-methionine + H2O = L-methionine (R)-S-oxide + [thioredoxin]-dithiol. Its function is as follows. Catalyzes the reversible oxidation-reduction of the R-enantiomer of free methionine sulfoxide to methionine. Specific for free L-methionine-(R)-S-oxide. The polypeptide is Free methionine-R-sulfoxide reductase (msrC) (Escherichia coli (strain K12)).